Consider the following 212-residue polypeptide: FMN-dependent NADH:quinone oxidoreductase (212 aa).

Residues S10, 16–18, and 98–101 contribute to the FMN site; these read SFS and MWNF.

The protein belongs to the azoreductase type 1 family. As to quaternary structure, homodimer. FMN is required as a cofactor.

It catalyses the reaction 2 a quinone + NADH + H(+) = 2 a 1,4-benzosemiquinone + NAD(+). It carries out the reaction N,N-dimethyl-1,4-phenylenediamine + anthranilate + 2 NAD(+) = 2-(4-dimethylaminophenyl)diazenylbenzoate + 2 NADH + 2 H(+). In terms of biological role, quinone reductase that provides resistance to thiol-specific stress caused by electrophilic quinones. Also exhibits azoreductase activity. Catalyzes the reductive cleavage of the azo bond in aromatic azo compounds to the corresponding amines. This is FMN-dependent NADH:quinone oxidoreductase from Desulfotalea psychrophila (strain LSv54 / DSM 12343).